We begin with the raw amino-acid sequence, 303 residues long: Aspartate carbamoyltransferase catalytic subunit (303 aa).

2 residues coordinate carbamoyl phosphate: Arg-48 and Thr-49. Lys-76 serves as a coordination point for L-aspartate. 3 residues coordinate carbamoyl phosphate: Arg-98, His-129, and Gln-132. L-aspartate-binding residues include Arg-162 and Arg-214. Residues Ala-257 and Pro-258 each contribute to the carbamoyl phosphate site.

Belongs to the aspartate/ornithine carbamoyltransferase superfamily. ATCase family. As to quaternary structure, heterododecamer (2C3:3R2) of six catalytic PyrB chains organized as two trimers (C3), and six regulatory PyrI chains organized as three dimers (R2).

It carries out the reaction carbamoyl phosphate + L-aspartate = N-carbamoyl-L-aspartate + phosphate + H(+). The protein operates within pyrimidine metabolism; UMP biosynthesis via de novo pathway; (S)-dihydroorotate from bicarbonate: step 2/3. Functionally, catalyzes the condensation of carbamoyl phosphate and aspartate to form carbamoyl aspartate and inorganic phosphate, the committed step in the de novo pyrimidine nucleotide biosynthesis pathway. The polypeptide is Aspartate carbamoyltransferase catalytic subunit (Leuconostoc citreum (strain KM20)).